Reading from the N-terminus, the 273-residue chain is Endoplasmic reticulum resident protein 27 (273 aa).

Positions M1–A25 are cleaved as a signal peptide. One can recognise a Thioredoxin domain in the interval E39–V152. N100 carries an N-linked (GlcNAc...) asparagine glycan. Positions D230–D233 are PDIA3-binding site. The short motif at K270–L273 is the Prevents secretion from ER element.

The protein belongs to the protein disulfide isomerase family. In terms of assembly, interacts with PDIA3.

Its subcellular location is the endoplasmic reticulum lumen. Functionally, specifically binds unfolded proteins and may recruit protein disulfide isomerase PDIA3 to unfolded substrates. Binds protein substrates via a hydrophobic pocket in the C-terminal domain. May play a role in the unfolded stress response. The protein is Endoplasmic reticulum resident protein 27 (ERP27) of Homo sapiens (Human).